Reading from the N-terminus, the 351-residue chain is Protein RecA (351 aa).

Gly-68–Thr-75 is an ATP binding site.

Belongs to the RecA family.

Its subcellular location is the cytoplasm. Can catalyze the hydrolysis of ATP in the presence of single-stranded DNA, the ATP-dependent uptake of single-stranded DNA by duplex DNA, and the ATP-dependent hybridization of homologous single-stranded DNAs. It interacts with LexA causing its activation and leading to its autocatalytic cleavage. The polypeptide is Protein RecA (Chloroflexus aurantiacus (strain ATCC 29364 / DSM 637 / Y-400-fl)).